The sequence spans 689 residues: DNA topoisomerase 1 (689 aa).

The Toprim domain maps to 3-113 (DNLVIVESPA…KENRVVFNEI (111 aa)). E9 and D82 together coordinate Mg(2+). One can recognise a Topo IA-type catalytic domain in the interval 129-557 (EMNLVDAQQA…FFSSFKQDVE (429 aa)). The interaction with DNA stretch occupies residues 163–168 (SAGRVQ). Y298 serves as the catalytic O-(5'-phospho-DNA)-tyrosine intermediate. The segment at 328–357 (SKRKASGKQGDQDAHEAIRPSSTMRTPDDM) is disordered. 3 consecutive C4-type zinc fingers follow at residues 577-603 (CEVC…FPDC), 617-645 (CPKC…YPEC), and 658-681 (CPKC…CSNC).

It belongs to the type IA topoisomerase family. In terms of assembly, monomer. Mg(2+) is required as a cofactor.

It carries out the reaction ATP-independent breakage of single-stranded DNA, followed by passage and rejoining.. Its function is as follows. Releases the supercoiling and torsional tension of DNA, which is introduced during the DNA replication and transcription, by transiently cleaving and rejoining one strand of the DNA duplex. Introduces a single-strand break via transesterification at a target site in duplex DNA. The scissile phosphodiester is attacked by the catalytic tyrosine of the enzyme, resulting in the formation of a DNA-(5'-phosphotyrosyl)-enzyme intermediate and the expulsion of a 3'-OH DNA strand. The free DNA strand then undergoes passage around the unbroken strand, thus removing DNA supercoils. Finally, in the religation step, the DNA 3'-OH attacks the covalent intermediate to expel the active-site tyrosine and restore the DNA phosphodiester backbone. The polypeptide is DNA topoisomerase 1 (Staphylococcus aureus).